We begin with the raw amino-acid sequence, 661 residues long: SUMO-activating enzyme subunit 2 (661 aa).

Residues 29 to 34 (GAGGIG), Asp53, 61 to 64 (NLNR), Lys77, and 122 to 127 (DNISAR) contribute to the ATP site. Positions 163 and 166 each coordinate Zn(2+). Catalysis depends on Cys178, which acts as the Glycyl thioester intermediate. The Zn(2+) site is built by Cys436 and Cys439. Positions 545–661 (KKQQQKEKDQ…SKKLKSNLQD (117 aa)) are disordered. The span at 548–563 (QQKEKDQKEGKTTTIE) shows a compositional bias: basic and acidic residues. Low complexity-rich tracts occupy residues 577–607 (TSQT…NNNN) and 623–634 (SSTTTSSATPSI).

Belongs to the ubiquitin-activating E1 family. As to quaternary structure, heterodimer of sae1 and sae2. The complex binds sumo via sae2.

The protein resides in the nucleus. It functions in the pathway protein modification; protein sumoylation. The dimeric enzyme acts as an E1 ligase for sumo. It mediates ATP-dependent activation of sumo and formation of a thioester with a conserved cysteine residue on sae2. In Dictyostelium discoideum (Social amoeba), this protein is SUMO-activating enzyme subunit 2 (uba2).